The sequence spans 440 residues: Cytochrome c biogenesis protein Ccs1 (440 aa).

3 consecutive transmembrane segments (helical) span residues 19 to 39, 78 to 98, and 164 to 184; these read LRLAIWLLASIGILIALGTFI, NIWFFGIVGFFASSLLACTYT, and VGPILVHFSILFVLFGSACGA.

Belongs to the Ccs1/CcsB family. In terms of assembly, may interact with CcsA.

The protein localises to the plastid. It is found in the chloroplast thylakoid membrane. In terms of biological role, required during biogenesis of c-type cytochromes (cytochrome c6 and cytochrome f) at the step of heme attachment. The protein is Cytochrome c biogenesis protein Ccs1 of Emiliania huxleyi (Coccolithophore).